Here is a 235-residue protein sequence, read N- to C-terminus: Serine protease SplA (235 aa).

The first 35 residues, 1-35, serve as a signal peptide directing secretion; sequence MNKNVMVKGLTALTILTSLGFAENISNQPHSIAKA. Active-site charge relay system residues include H74, D113, and S189.

This sequence belongs to the peptidase S1B family.

The protein resides in the secreted. This is Serine protease SplA (splA) from Staphylococcus aureus (strain Mu3 / ATCC 700698).